Here is a 520-residue protein sequence, read N- to C-terminus: Putative cytochrome P450 CYP13A3 (520 aa).

C464 provides a ligand contact to heme.

It belongs to the cytochrome P450 family. Requires heme as cofactor.

Functionally, cytochromes P450 are a group of heme-thiolate monooxygenases. They oxidize a variety of structurally unrelated compounds, including steroids, fatty acids, and xenobiotics. The protein is Putative cytochrome P450 CYP13A3 (cyp-13A3) of Caenorhabditis elegans.